The following is a 421-amino-acid chain: Serine hydroxymethyltransferase (421 aa).

(6S)-5,6,7,8-tetrahydrofolate-binding positions include Leu120 and 124–126 (GHL). Lys229 carries the post-translational modification N6-(pyridoxal phosphate)lysine. (6S)-5,6,7,8-tetrahydrofolate is bound at residue 354 to 356 (SPF).

This sequence belongs to the SHMT family. As to quaternary structure, homodimer. The cofactor is pyridoxal 5'-phosphate.

The protein localises to the cytoplasm. It catalyses the reaction (6R)-5,10-methylene-5,6,7,8-tetrahydrofolate + glycine + H2O = (6S)-5,6,7,8-tetrahydrofolate + L-serine. It participates in one-carbon metabolism; tetrahydrofolate interconversion. The protein operates within amino-acid biosynthesis; glycine biosynthesis; glycine from L-serine: step 1/1. Functionally, catalyzes the reversible interconversion of serine and glycine with tetrahydrofolate (THF) serving as the one-carbon carrier. This reaction serves as the major source of one-carbon groups required for the biosynthesis of purines, thymidylate, methionine, and other important biomolecules. Also exhibits THF-independent aldolase activity toward beta-hydroxyamino acids, producing glycine and aldehydes, via a retro-aldol mechanism. The chain is Serine hydroxymethyltransferase from Opitutus terrae (strain DSM 11246 / JCM 15787 / PB90-1).